A 361-amino-acid chain; its full sequence is Cytochrome P450 family protein EryCII (361 aa).

It belongs to the cytochrome P450 family. In terms of assembly, heterotetramer composed of EryCII and EryCIII.

It functions in the pathway antibiotic biosynthesis; erythromycin biosynthesis. Its function is as follows. Involved in the erythromycin biosynthesis pathway. Acts by forming a complex and stabilizing the desosaminyl transferase EryCIII. The sequence is that of Cytochrome P450 family protein EryCII (eryCII) from Saccharopolyspora erythraea (strain ATCC 11635 / DSM 40517 / JCM 4748 / NBRC 13426 / NCIMB 8594 / NRRL 2338).